A 187-amino-acid polypeptide reads, in one-letter code: GTP cyclohydrolase 1 (187 aa).

Residues cysteine 76, histidine 79, and cysteine 148 each coordinate Zn(2+).

It belongs to the GTP cyclohydrolase I family. Homomer.

The catalysed reaction is GTP + H2O = 7,8-dihydroneopterin 3'-triphosphate + formate + H(+). It functions in the pathway cofactor biosynthesis; 7,8-dihydroneopterin triphosphate biosynthesis; 7,8-dihydroneopterin triphosphate from GTP: step 1/1. The polypeptide is GTP cyclohydrolase 1 (Streptococcus gordonii (strain Challis / ATCC 35105 / BCRC 15272 / CH1 / DL1 / V288)).